A 98-amino-acid chain; its full sequence is U10-barytoxin-Tl1a (98 aa).

The signal sequence occupies residues 1 to 21 (MKTLVLVAVLGVASLYLLSSA). Positions 22–50 (SEVQQLSPAEEEFRAFVSTFGGLFETEER) are excised as a propeptide. 3 disulfide bridges follow: C57/C71, C64/C76, and C70/C89.

It belongs to the neurotoxin 10 (Hwtx-1) family. 27 (ICK-3) subfamily. As to expression, expressed by the venom gland.

It is found in the secreted. Its function is as follows. Ion channel inhibitor. The chain is U10-barytoxin-Tl1a from Trittame loki (Brush-footed trapdoor spider).